The primary structure comprises 166 residues: MAATMFRATLRGWRTGVQRGCGLRLLSQTQGPPDYPRFVESVDEYQFVERLLPATRIPDPPKHEHYPTPSGWQPPRDPPPNLPYFVRRSRMHNIPVYKDITHGNRQMTVIRKVEGDIWALQKDVEDFLSPLLGKTPVTQVNEVTGTLRIKGYFDQELKAWLLEKGF.

Residues 56 to 78 (RIPDPPKHEHYPTPSGWQPPRDP) form a disordered region.

Belongs to the mitochondrion-specific ribosomal protein mL49 family. Component of the mitochondrial large ribosomal subunit (mt-LSU). Mature mammalian 55S mitochondrial ribosomes consist of a small (28S) and a large (39S) subunit. The 28S small subunit contains a 12S ribosomal RNA (12S mt-rRNA) and 30 different proteins. The 39S large subunit contains a 16S rRNA (16S mt-rRNA), a copy of mitochondrial valine transfer RNA (mt-tRNA(Val)), which plays an integral structural role, and 52 different proteins. Interacts with OXA1L. Ubiquitous.

Its subcellular location is the mitochondrion. The protein is Large ribosomal subunit protein mL49 (MRPL49) of Homo sapiens (Human).